The sequence spans 353 residues: Polyadenylate-binding protein-interacting protein 10 (353 aa).

The disordered stretch occupies residues 1–61; sequence MAVAENAGVK…IDSTPETDDR (61 aa). The segment covering 20–31 has biased composition (low complexity); that stretch reads NNNTAASATETT. The PAM2-like motif lies at 96–106; sequence KLNPMAQEFVP. Residues 128–159 are disordered; sequence AAPPKLADGNDHFPRRRRSFGQGKRRMNKRTS. The span at 141-156 shows a compositional bias: basic residues; the sequence is PRRRRSFGQGKRRMNK. The Bipartite nuclear localization signal signature appears at 142 to 153; it reads RRRRSFGQGKRR. 2 consecutive RRM domains span residues 169–244 and 266–341; these read RTVY…PSKT.

In terms of tissue distribution, expressed in cauline leaves, stems, rosette leaves, immature siliques and primary inflorescences.

The protein resides in the nucleus. The polypeptide is Polyadenylate-binding protein-interacting protein 10 (CID10) (Arabidopsis thaliana (Mouse-ear cress)).